We begin with the raw amino-acid sequence, 483 residues long: tRNA sulfurtransferase (483 aa).

The region spanning E61 to R165 is the THUMP domain. ATP-binding positions include L183–I184, K265, G287, and Q296. C344 and C456 form a disulfide bridge. The 80-residue stretch at F404–K483 folds into the Rhodanese domain. The Cysteine persulfide intermediate role is filled by C456.

It belongs to the ThiI family.

The protein localises to the cytoplasm. The enzyme catalyses [ThiI sulfur-carrier protein]-S-sulfanyl-L-cysteine + a uridine in tRNA + 2 reduced [2Fe-2S]-[ferredoxin] + ATP + H(+) = [ThiI sulfur-carrier protein]-L-cysteine + a 4-thiouridine in tRNA + 2 oxidized [2Fe-2S]-[ferredoxin] + AMP + diphosphate. The catalysed reaction is [ThiS sulfur-carrier protein]-C-terminal Gly-Gly-AMP + S-sulfanyl-L-cysteinyl-[cysteine desulfurase] + AH2 = [ThiS sulfur-carrier protein]-C-terminal-Gly-aminoethanethioate + L-cysteinyl-[cysteine desulfurase] + A + AMP + 2 H(+). It participates in cofactor biosynthesis; thiamine diphosphate biosynthesis. Its function is as follows. Catalyzes the ATP-dependent transfer of a sulfur to tRNA to produce 4-thiouridine in position 8 of tRNAs, which functions as a near-UV photosensor. Also catalyzes the transfer of sulfur to the sulfur carrier protein ThiS, forming ThiS-thiocarboxylate. This is a step in the synthesis of thiazole, in the thiamine biosynthesis pathway. The sulfur is donated as persulfide by IscS. This chain is tRNA sulfurtransferase, found in Proteus mirabilis (strain HI4320).